Reading from the N-terminus, the 345-residue chain is Metal-dependent phosphohydrolase cns2 (345 aa).

The HD domain occupies 70 to 171 (RLEHSVGAFI…QLCADRLDYA (102 aa)).

Interacts with cns1.

It localises to the lipid droplet. Its pathway is secondary metabolite biosynthesis. Its function is as follows. Metal-dependent phosphohydrolase; part of the gene cluster that mediates the biosynthesis of cordycepin (COR) and pentostatin (PTN), two adenosine analogs with related bioactivity profiles as both mimic adenosine and can inhibit some of the processes that are adenosine dependent. Within the pathway, cns2 catalyzes dephosphorylation of 3'-AMP to produce 2'-carbonyl-3'-deoxyadenosine (2'-C-3'-dA). The first step of cordycepin biosynthesis involves hydroxyl phosphorylation of the 3'-OH position on adenosine to produce adenosine-3'-monophosphate (3'-AMP), catalyzed by kinase activity of cns3. Next, 3'-AMP is dephosphorylated to 2'-carbonyl-3'-deoxyadenosine by cns2, which is finally converted to cordycepin (3'-deoxyadenosine) by the oxidoreductase cns1. In Cordyceps militaris (strain CM01) (Caterpillar fungus), this protein is Metal-dependent phosphohydrolase cns2.